A 126-amino-acid chain; its full sequence is Large ribosomal subunit protein bL12 (126 aa).

The protein belongs to the bacterial ribosomal protein bL12 family. Homodimer. Part of the ribosomal stalk of the 50S ribosomal subunit. Forms a multimeric L10(L12)X complex, where L10 forms an elongated spine to which 2 to 4 L12 dimers bind in a sequential fashion. Binds GTP-bound translation factors.

Its function is as follows. Forms part of the ribosomal stalk which helps the ribosome interact with GTP-bound translation factors. Is thus essential for accurate translation. This is Large ribosomal subunit protein bL12 from Moorella thermoacetica (strain ATCC 39073 / JCM 9320).